The primary structure comprises 164 residues: HTH-type transcriptional regulator IscR (164 aa).

In terms of domain architecture, HTH rrf2-type spans 2–131; the sequence is RLTSKGRYAV…NNITLAELVN (130 aa). A DNA-binding region (H-T-H motif) is located at residues 28-51; it reads LADISERQGISLSYLEQLFSRLRK. Residues Cys-92, Cys-98, and Cys-104 each coordinate [2Fe-2S] cluster. Residues Cys-92, Cys-98, and Cys-104 each contribute to the a metal cation site. Positions 145-164 are disordered; sequence DTRRTANGRPQETINVNLRA. The span at 152–164 shows a compositional bias: polar residues; sequence GRPQETINVNLRA.

The cofactor is [2Fe-2S] cluster.

Its function is as follows. Regulates the transcription of several operons and genes involved in the biogenesis of Fe-S clusters and Fe-S-containing proteins. The protein is HTH-type transcriptional regulator IscR of Serratia proteamaculans (strain 568).